The sequence spans 324 residues: Delta-aminolevulinic acid dehydratase (324 aa).

The Zn(2+) site is built by Cys118, Cys120, and Cys128. Lys195 serves as the catalytic Schiff-base intermediate with substrate. 5-aminolevulinate is bound by residues Arg205 and Arg217. Residue Glu233 coordinates Mg(2+). Catalysis depends on Lys248, which acts as the Schiff-base intermediate with substrate. Ser274 and Tyr313 together coordinate 5-aminolevulinate.

The protein belongs to the ALAD family. In terms of assembly, homooctamer. Zn(2+) is required as a cofactor.

The catalysed reaction is 2 5-aminolevulinate = porphobilinogen + 2 H2O + H(+). It functions in the pathway porphyrin-containing compound metabolism; protoporphyrin-IX biosynthesis; coproporphyrinogen-III from 5-aminolevulinate: step 1/4. Its function is as follows. Catalyzes an early step in the biosynthesis of tetrapyrroles. Binds two molecules of 5-aminolevulinate per subunit, each at a distinct site, and catalyzes their condensation to form porphobilinogen. The polypeptide is Delta-aminolevulinic acid dehydratase (hemB) (Staphylococcus epidermidis (strain ATCC 12228 / FDA PCI 1200)).